The primary structure comprises 276 residues: Undecaprenyl-diphosphatase 2 (276 aa).

Transmembrane regions (helical) follow at residues 1–21 (MSLWFLVFLSVLQGVTELFPV), 44–64 (QLLPFLVALHLGTAFALLWYF), 87–107 (GHLMWALIIGTIPAGLVGLLL), 114–134 (VFHDLRIVAVALIVNGILLWL), 150–170 (LTFKQAFFVGLAQVGALIPGF), 190–210 (AAEFSFLLGTPIIFAAGLLEL), 222–242 (DALLGGVLTAIAAYLSVRFLM), and 251–271 (LASFGLYCALAGLFCLGWFMF).

The protein belongs to the UppP family.

Its subcellular location is the cell inner membrane. The catalysed reaction is di-trans,octa-cis-undecaprenyl diphosphate + H2O = di-trans,octa-cis-undecaprenyl phosphate + phosphate + H(+). Catalyzes the dephosphorylation of undecaprenyl diphosphate (UPP). Confers resistance to bacitracin. The protein is Undecaprenyl-diphosphatase 2 of Burkholderia thailandensis (strain ATCC 700388 / DSM 13276 / CCUG 48851 / CIP 106301 / E264).